We begin with the raw amino-acid sequence, 364 residues long: Probable dual-specificity RNA methyltransferase RlmN (364 aa).

E107 (proton acceptor) is an active-site residue. The 234-residue stretch at 113–346 folds into the Radical SAM core domain; that stretch reads HDYGNSVCVT…ATIRREQGSD (234 aa). Cysteines 120 and 351 form a disulfide. [4Fe-4S] cluster is bound by residues C127, C131, and C134. S-adenosyl-L-methionine contacts are provided by residues 177 to 178, S209, 232 to 234, and N308; these read GE and SLH. Catalysis depends on C351, which acts as the S-methylcysteine intermediate.

It belongs to the radical SAM superfamily. RlmN family. It depends on [4Fe-4S] cluster as a cofactor.

It localises to the cytoplasm. It catalyses the reaction adenosine(2503) in 23S rRNA + 2 reduced [2Fe-2S]-[ferredoxin] + 2 S-adenosyl-L-methionine = 2-methyladenosine(2503) in 23S rRNA + 5'-deoxyadenosine + L-methionine + 2 oxidized [2Fe-2S]-[ferredoxin] + S-adenosyl-L-homocysteine. The catalysed reaction is adenosine(37) in tRNA + 2 reduced [2Fe-2S]-[ferredoxin] + 2 S-adenosyl-L-methionine = 2-methyladenosine(37) in tRNA + 5'-deoxyadenosine + L-methionine + 2 oxidized [2Fe-2S]-[ferredoxin] + S-adenosyl-L-homocysteine. Its function is as follows. Specifically methylates position 2 of adenine 2503 in 23S rRNA and position 2 of adenine 37 in tRNAs. Confers resistance to some classes of antibiotics. The polypeptide is Probable dual-specificity RNA methyltransferase RlmN (Staphylococcus aureus (strain MW2)).